Reading from the N-terminus, the 176-residue chain is Neuroblastoma suppressor of tumorigenicity 1 (176 aa).

Residues 1–17 (MTVWLLIGFLLPVAIFA) form the signal peptide. Intrachain disulfides connect C34–C84, C48–C98, C58–C117, C62–C119, and C81–C122. Positions 34–123 (CEAKNITQIV…ILQCSCQACG (90 aa)) constitute a CTCK domain. Residues 148-176 (ETLGHHHHRPPAREEDSPAQSQREGESEE) are disordered.

Belongs to the DAN family. In terms of assembly, interacts with bmp2; the interaction is blocked in presence of nog.

The protein localises to the secreted. Functionally, may act as a tumor suppressor. Cytokine that has an axial patterning activity. Acts like bone morpho-genetic protein (BMP) antagonist in embryonic explants. Blocks the bmp2 activity. This is Neuroblastoma suppressor of tumorigenicity 1 (nbl1) from Xenopus tropicalis (Western clawed frog).